The following is a 493-amino-acid chain: Glutamyl-tRNA(Gln) amidotransferase subunit A (493 aa).

Catalysis depends on charge relay system residues K79 and S159. The active-site Acyl-ester intermediate is the S183.

The protein belongs to the amidase family. GatA subfamily. In terms of assembly, heterotrimer of A, B and C subunits.

It carries out the reaction L-glutamyl-tRNA(Gln) + L-glutamine + ATP + H2O = L-glutaminyl-tRNA(Gln) + L-glutamate + ADP + phosphate + H(+). Allows the formation of correctly charged Gln-tRNA(Gln) through the transamidation of misacylated Glu-tRNA(Gln) in organisms which lack glutaminyl-tRNA synthetase. The reaction takes place in the presence of glutamine and ATP through an activated gamma-phospho-Glu-tRNA(Gln). The polypeptide is Glutamyl-tRNA(Gln) amidotransferase subunit A (Brucella ovis (strain ATCC 25840 / 63/290 / NCTC 10512)).